A 171-amino-acid chain; its full sequence is Ribosome maturation factor RimM (171 aa).

The 73-residue stretch at 98–170 folds into the PRC barrel domain; sequence EGEFYLHQII…AVQVSVPEGL (73 aa).

Belongs to the RimM family. As to quaternary structure, binds ribosomal protein uS19.

The protein localises to the cytoplasm. An accessory protein needed during the final step in the assembly of 30S ribosomal subunit, possibly for assembly of the head region. Essential for efficient processing of 16S rRNA. May be needed both before and after RbfA during the maturation of 16S rRNA. It has affinity for free ribosomal 30S subunits but not for 70S ribosomes. In Pediococcus pentosaceus (strain ATCC 25745 / CCUG 21536 / LMG 10740 / 183-1w), this protein is Ribosome maturation factor RimM.